We begin with the raw amino-acid sequence, 438 residues long: MEYFKNVPQIKYEGPKSNNPYAFKFYNPDEIIDGKPLKEHLRFSVAYWHTFTANGTDPFGAPTMQRPWDHFTDPMDIAKARVEAAFELFEKLDVPFFCFHDRDIAPEGETLRETNKNLDTIVAMIKDYLKTSKTKVLWGTANLFSNPRFVHGAATSCNADVFAYAAAQVKKALEITKELGGQNYVFWGGREGYETLLNTDMELELDNLARFLHMAVEYAQEIGFEGQFLIEPKPKEPTKHQYDFDAASVHAFLKKYDLDKYFKLNIEANHATLAGHDFQHELRYARINNILGSIDANMGDMLLGWDTDQYPTDIRMTTLAMYEVIKMGGFNKGGLNFDAKVRRASFEPEDLFLGHIAGMDAFAKGFKVAYKLVKDGVFDRFIEERYKSYREGIGAEIVSGKANFKTLEEYALNNPKIENKSGKQELLESILNQYLFSE.

Catalysis depends on residues His100 and Asp103. Mg(2+) is bound by residues Glu231, Glu267, His270, Asp295, Asp306, Asp308, and Asp338.

It belongs to the xylose isomerase family. As to quaternary structure, homotetramer. It depends on Mg(2+) as a cofactor.

The protein localises to the cytoplasm. It carries out the reaction alpha-D-xylose = alpha-D-xylulofuranose. The chain is Xylose isomerase from Thermoanaerobacter sp. (strain X514).